The chain runs to 483 residues: Glycogen synthase kinase-3 alpha (483 aa).

Residues 1–15 (MSGGGPSGGGPGGSG) show a composition bias toward gly residues. Residues 1–96 (MSGGGPSGGG…PPPGVKLGRD (96 aa)) are disordered. At serine 2 the chain carries N-acetylserine. The residue at position 2 (serine 2) is a Phosphoserine. Residue serine 21 is modified to Phosphoserine; by PKB/AKT1. The span at 25-82 (PGGGGGGGGGGPGGSASGPGGTGGGKASVGAMGGGVGASSSGGGPSGSGGGGSGGPGA) shows a compositional bias: gly residues. Residues serine 72, serine 77, and serine 97 each carry the phosphoserine modification. The 285-residue stretch at 119-403 (YTDIKVIGNG…PLEACAHSFF (285 aa)) folds into the Protein kinase domain. Residues 125–133 (IGNGSFGVV) and lysine 148 contribute to the ATP site. The active-site Proton acceptor is the aspartate 244. Phosphotyrosine is present on tyrosine 279. Positions 443 to 483 (PHLRSPSGPATLTSSSQALTETQTGQDWQAPDATPTLTNSS) are disordered. Residues 450–469 (GPATLTSSSQALTETQTGQD) are compositionally biased toward polar residues.

Belongs to the protein kinase superfamily. CMGC Ser/Thr protein kinase family. GSK-3 subfamily. As to quaternary structure, monomer. Interacts with ARRB2, AXIN1 and CTNNB1/beta-catenin. Interacts with CTNND2. Interacts with LMBR1L. Interacts with DDX3X. Interacts with TNFRSF10B. Post-translationally, phosphorylated by AKT1 at Ser-21: upon insulin-mediated signaling, the activated PKB/AKT1 protein kinase phosphorylates and deactivates GSK3A, resulting in the dephosphorylation and activation of GYS1. Activated by phosphorylation at Tyr-279.

The enzyme catalyses L-seryl-[tau protein] + ATP = O-phospho-L-seryl-[tau protein] + ADP + H(+). It carries out the reaction L-threonyl-[tau protein] + ATP = O-phospho-L-threonyl-[tau protein] + ADP + H(+). The catalysed reaction is L-seryl-[protein] + ATP = O-phospho-L-seryl-[protein] + ADP + H(+). It catalyses the reaction L-threonyl-[protein] + ATP = O-phospho-L-threonyl-[protein] + ADP + H(+). Its activity is regulated as follows. Activated by phosphorylation at Tyr-279. In response to insulin, inhibited by phosphorylation at Ser-21 by PKB/AKT1; phosphorylation at this site causes a conformational change, preventing access of substrates to the active site. Inhibited by lithium. Its function is as follows. Constitutively active protein kinase that acts as a negative regulator in the hormonal control of glucose homeostasis, Wnt signaling and regulation of transcription factors and microtubules, by phosphorylating and inactivating glycogen synthase (GYS1 or GYS2), CTNNB1/beta-catenin, APC and AXIN1. Requires primed phosphorylation of the majority of its substrates. Contributes to insulin regulation of glycogen synthesis by phosphorylating and inhibiting GYS1 activity and hence glycogen synthesis. Regulates glycogen metabolism in liver, but not in muscle. May also mediate the development of insulin resistance by regulating activation of transcription factors. In Wnt signaling, regulates the level and transcriptional activity of nuclear CTNNB1/beta-catenin. Facilitates amyloid precursor protein (APP) processing and the generation of APP-derived amyloid plaques found in Alzheimer disease. May be involved in the regulation of replication in pancreatic beta-cells. Is necessary for the establishment of neuronal polarity and axon outgrowth. Through phosphorylation of the anti-apoptotic protein MCL1, may control cell apoptosis in response to growth factors deprivation. Acts as a regulator of autophagy by mediating phosphorylation of KAT5/TIP60 under starvation conditions, activating KAT5/TIP60 acetyltransferase activity and promoting acetylation of key autophagy regulators, such as ULK1 and RUBCNL/Pacer. Negatively regulates extrinsic apoptotic signaling pathway via death domain receptors. Promotes the formation of an anti-apoptotic complex, made of DDX3X, BRIC2 and GSK3B, at death receptors, including TNFRSF10B. The anti-apoptotic function is most effective with weak apoptotic signals and can be overcome by stronger stimulation. In Rattus norvegicus (Rat), this protein is Glycogen synthase kinase-3 alpha (Gsk3a).